Consider the following 200-residue polypeptide: Imidazole glycerol phosphate synthase subunit HisH (200 aa).

Positions 3 to 200 (EVALIDAGGA…LRNFLEMDAA (198 aa)) constitute a Glutamine amidotransferase type-1 domain. Cysteine 78 functions as the Nucleophile in the catalytic mechanism. Catalysis depends on residues histidine 179 and glutamate 181.

In terms of assembly, heterodimer of HisH and HisF.

Its subcellular location is the cytoplasm. It catalyses the reaction 5-[(5-phospho-1-deoxy-D-ribulos-1-ylimino)methylamino]-1-(5-phospho-beta-D-ribosyl)imidazole-4-carboxamide + L-glutamine = D-erythro-1-(imidazol-4-yl)glycerol 3-phosphate + 5-amino-1-(5-phospho-beta-D-ribosyl)imidazole-4-carboxamide + L-glutamate + H(+). The catalysed reaction is L-glutamine + H2O = L-glutamate + NH4(+). The protein operates within amino-acid biosynthesis; L-histidine biosynthesis; L-histidine from 5-phospho-alpha-D-ribose 1-diphosphate: step 5/9. Its function is as follows. IGPS catalyzes the conversion of PRFAR and glutamine to IGP, AICAR and glutamate. The HisH subunit catalyzes the hydrolysis of glutamine to glutamate and ammonia as part of the synthesis of IGP and AICAR. The resulting ammonia molecule is channeled to the active site of HisF. In Xylella fastidiosa (strain Temecula1 / ATCC 700964), this protein is Imidazole glycerol phosphate synthase subunit HisH.